Consider the following 249-residue polypeptide: NADH dehydrogenase [ubiquinone] flavoprotein 2, mitochondrial (249 aa).

The transit peptide at 1-32 (MFFSAALRARAAGLTAHWGRHVRNLHKTAKQN) directs the protein to the mitochondrion. Lys61 bears the N6-acetyllysine mark. [2Fe-2S] cluster contacts are provided by Cys135, Cys140, Cys176, and Cys180. Tyr193 bears the Phosphotyrosine; by SRC mark. Residues 213 to 249 (IPKPGPRSGRFSCEPAGGLTSLTEPPKGPGFGVQAGL) form a disordered region.

The protein belongs to the complex I 24 kDa subunit family. Core subunit of respiratory chain NADH dehydrogenase (Complex I) which is composed of 45 different subunits. This is a component of the flavoprotein-sulfur (FP) fragment of the enzyme. [2Fe-2S] cluster is required as a cofactor.

It localises to the mitochondrion inner membrane. The enzyme catalyses a ubiquinone + NADH + 5 H(+)(in) = a ubiquinol + NAD(+) + 4 H(+)(out). Functionally, core subunit of the mitochondrial membrane respiratory chain NADH dehydrogenase (Complex I) which catalyzes electron transfer from NADH through the respiratory chain, using ubiquinone as an electron acceptor. Parts of the peripheral arm of the enzyme, where the electrons from NADH are accepted by flavin mononucleotide (FMN) and then passed along a chain of iron-sulfur clusters by electron tunnelling to the final acceptor ubiquinone. Contains one iron-sulfur cluster. In Pan troglodytes (Chimpanzee), this protein is NADH dehydrogenase [ubiquinone] flavoprotein 2, mitochondrial.